The sequence spans 587 residues: Protoheme IX farnesyltransferase (587 aa).

Positions 1-317 (MAARSLMRIL…ISLTKPKVIS (317 aa)) are unknown. 16 consecutive transmembrane segments (helical) span residues 9–29 (ILLV…LVTI), 58–78 (LLHR…LVAV), 93–113 (GIAA…VWGV), 123–143 (LSGA…IAVP), 172–192 (AAGV…FGMM), 195–215 (VPTN…WMAL), 238–258 (SLFL…PVAG), 260–280 (LISL…AVIL), 315–335 (VISL…AGLP), 337–357 (WWLV…AGAI), 386–406 (AAFI…WVFT), 409–429 (LAAF…TGWL), 437–457 (IIIG…AVTG), 464–484 (VVLF…LALV), 522–542 (LLPV…VVLG), and 560–580 (AIWG…AAMV). Residues 318 to 587 (LLLVTTLTTM…AMVADRLIIG (270 aa)) are protoheme IX prenyltransferase.

It in the C-terminal section; belongs to the UbiA prenyltransferase family. Protoheme IX farnesyltransferase subfamily.

Its subcellular location is the cell membrane. It catalyses the reaction heme b + (2E,6E)-farnesyl diphosphate + H2O = Fe(II)-heme o + diphosphate. It participates in porphyrin-containing compound metabolism; heme O biosynthesis; heme O from protoheme: step 1/1. Converts heme B (protoheme IX) to heme O by substitution of the vinyl group on carbon 2 of heme B porphyrin ring with a hydroxyethyl farnesyl side group. This chain is Protoheme IX farnesyltransferase (ctaB), found in Chloroflexus aurantiacus (strain ATCC 29366 / DSM 635 / J-10-fl).